The sequence spans 139 residues: Small ribosomal subunit protein uS12 (139 aa).

It belongs to the universal ribosomal protein uS12 family. As to quaternary structure, part of the 30S ribosomal subunit. Contacts proteins S8 and S17. May interact with IF1 in the 30S initiation complex.

Functionally, with S4 and S5 plays an important role in translational accuracy. Its function is as follows. Interacts with and stabilizes bases of the 16S rRNA that are involved in tRNA selection in the A site and with the mRNA backbone. Located at the interface of the 30S and 50S subunits, it traverses the body of the 30S subunit contacting proteins on the other side and probably holding the rRNA structure together. The combined cluster of proteins S8, S12 and S17 appears to hold together the shoulder and platform of the 30S subunit. The protein is Small ribosomal subunit protein uS12 of Mycoplasma pneumoniae (strain ATCC 29342 / M129 / Subtype 1) (Mycoplasmoides pneumoniae).